Reading from the N-terminus, the 62-residue chain is Translational regulator CsrA (62 aa).

The protein belongs to the CsrA/RsmA family. In terms of assembly, homodimer; the beta-strands of each monomer intercalate to form a hydrophobic core, while the alpha-helices form wings that extend away from the core.

Its subcellular location is the cytoplasm. A key translational regulator that binds mRNA to regulate translation initiation and/or mRNA stability. Mediates global changes in gene expression, shifting from rapid growth to stress survival by linking envelope stress, the stringent response and the catabolite repression systems. Usually binds in the 5'-UTR; binding at or near the Shine-Dalgarno sequence prevents ribosome-binding, repressing translation, binding elsewhere in the 5'-UTR can activate translation and/or stabilize the mRNA. Its function is antagonized by small RNA(s). The sequence is that of Translational regulator CsrA from Haemophilus ducreyi (strain 35000HP / ATCC 700724).